The chain runs to 99 residues: uncharacterized protein (99 aa).

Residues 43–95 (ENEEIYADQVRRIKLRLRELRETYATSEDNWRELMDNLEELRDQIERLAIRGG) are a coiled coil.

This is an uncharacterized protein from Archaeoglobus fulgidus (strain ATCC 49558 / DSM 4304 / JCM 9628 / NBRC 100126 / VC-16).